Consider the following 806-residue polypeptide: Protein translocase subunit SecA 2 (806 aa).

Residues glutamine 122, 140-144 (GEGKT), and aspartate 533 each bind ATP.

The protein belongs to the SecA family. Monomer and homodimer. Part of the essential Sec protein translocation apparatus which comprises SecA, SecYEG and auxiliary proteins SecDF. Other proteins may also be involved.

The protein localises to the cell membrane. The protein resides in the cytoplasm. It catalyses the reaction ATP + H2O + cellular proteinSide 1 = ADP + phosphate + cellular proteinSide 2.. Its function is as follows. Part of the Sec protein translocase complex. Interacts with the SecYEG preprotein conducting channel. Has a central role in coupling the hydrolysis of ATP to the transfer of proteins into and across the cell membrane, serving as an ATP-driven molecular motor driving the stepwise translocation of polypeptide chains across the membrane. The sequence is that of Protein translocase subunit SecA 2 from Mycobacterium ulcerans (strain Agy99).